Consider the following 127-residue polypeptide: Putative 2Fe-2S ferredoxin (127 aa).

3 residues coordinate [2Fe-2S] cluster: C23, C54, and C58.

It belongs to the 2Fe2S Shethna-type ferredoxin family. It depends on [2Fe-2S] cluster as a cofactor.

In terms of biological role, ferredoxins are iron-sulfur proteins that transfer electrons in a wide variety of metabolic reactions. This Priestia megaterium (Bacillus megaterium) protein is Putative 2Fe-2S ferredoxin (cbiW).